A 305-amino-acid chain; its full sequence is Orotidine 5'-phosphate decarboxylase (305 aa).

Lys-108 acts as the Proton donor in catalysis.

This sequence belongs to the OMP decarboxylase family. Type 2 subfamily.

The catalysed reaction is orotidine 5'-phosphate + H(+) = UMP + CO2. The protein operates within pyrimidine metabolism; UMP biosynthesis via de novo pathway; UMP from orotate: step 2/2. The polypeptide is Orotidine 5'-phosphate decarboxylase (Caldicellulosiruptor bescii (strain ATCC BAA-1888 / DSM 6725 / KCTC 15123 / Z-1320) (Anaerocellum thermophilum)).